We begin with the raw amino-acid sequence, 513 residues long: OBERON-like protein (513 aa).

The PHD-type zinc-finger motif lies at 166 to 235; it reads NGFCNLCMCV…VFRCQACSXT (70 aa). Residues 372 to 469 are a coiled coil; it reads RELADKAREA…LYEKIKLQES (98 aa). Residues 493–513 are disordered; sequence YNGPPKADSQSNDCHPFRTNP. Residues 500–513 are compositionally biased toward polar residues; the sequence is DSQSNDCHPFRTNP.

As to quaternary structure, self-interacts and probably forms heteromers. Binds to VPg of pea seed borne mosaic virus (PSbMV), turnip mosaic virus (TuMV) and lettuce mosaic virus (LMV), but not with VPg of tobacco etch virus (TEV), cowpea mosaic virus (CPMV), tomato black ring virus (TBRV) and grapevine fan leaf virus (GFLV).

It is found in the nucleus. Required for the maintenance and/or establishment of both the shoot and root meristems, probably by controlling the expression of the meristem genes and of genes required for auxin responses. Involved in the development of the basal pole and in auxin-mediated root and vascular development in the embryo. Confers sensitivity to turnip mosaic virus (TuMV) probably by promoting viral movement and multiplication via interaction with TuMV VPg. This chain is OBERON-like protein (PVIP), found in Pisum sativum (Garden pea).